We begin with the raw amino-acid sequence, 143 residues long: Large ribosomal subunit protein uL16 (143 aa).

It belongs to the universal ribosomal protein uL16 family. As to quaternary structure, part of the 50S ribosomal subunit.

Functionally, binds 23S rRNA and is also seen to make contacts with the A and possibly P site tRNAs. In Caulobacter vibrioides (strain ATCC 19089 / CIP 103742 / CB 15) (Caulobacter crescentus), this protein is Large ribosomal subunit protein uL16.